A 418-amino-acid chain; its full sequence is Delta(14)-sterol reductase TM7SF2 (418 aa).

Transmembrane regions (helical) follow at residues 13–35 (FGGPLGVAALLILLPATMFHLLL), 62–81 (ALLLLFIWLGLQVALYLLPA), 102–124 (GFQALVLTALLMGLGVSVGLPLG), 129–148 (MLLPLAFATTLTSFIFSLLL), 255–277 (FGFMLVFGDLAWVPFTYSLQAQF), and 287–304 (LPMALLICLLKVIGYYIF). Residues lysine 311, arginine 315, leucine 338, tryptophan 343, and 350-351 (NY) contribute to the NADP(+) site. A helical transmembrane segment spans residues 355-377 (LIMALAWSLPCGLSHLLPYFYVL). NADP(+) is bound by residues aspartate 390, 394-398 (CLQKY), and tyrosine 405.

Belongs to the ERG4/ERG24 family. Strongly expressed in liver, weaker in ovary, testis, kidney and brain.

The protein localises to the endoplasmic reticulum membrane. It localises to the microsome membrane. The enzyme catalyses 4,4-dimethyl-5alpha-cholesta-8,24-dien-3beta-ol + NADP(+) = 4,4-dimethyl-5alpha-cholesta-8,14,24-trien-3beta-ol + NADPH + H(+). The catalysed reaction is 5alpha-cholest-8,14-dien-3beta-ol + NADPH + H(+) = 5alpha-cholest-8-en-3beta-ol + NADP(+). It carries out the reaction 4,4-dimethyl-8,14-cholestadien-3beta-ol + NADPH + H(+) = 4,4-dimethyl-5alpha-cholest-8-en-3beta-ol + NADP(+). It participates in steroid biosynthesis; cholesterol biosynthesis. Its function is as follows. Catalyzes the reduction of the C14-unsaturated bond of lanosterol, as part of the metabolic pathway leading to cholesterol biosynthesis. This is Delta(14)-sterol reductase TM7SF2 (Tm7sf2) from Mus musculus (Mouse).